A 273-amino-acid polypeptide reads, in one-letter code: MTAHGASREATAAARERLDALTDSTSVDVVQLADELAAVTALLDREVSLRRVLTDPAQAAEAKAELAGRLFGSQIGGPATDLVTGMVRSRWSQSRDLVDAVEELADIADLTAAQRAGVLDDVEDELFRFGRIVSSNPALRAALTDRTADKAARSELVHSLLGGRATATTERLVTRLVTTPRGRSLEAGLESLSKLAAERRDRLVAVVTTAVPLSDTQKQRLGAALATLYGRQMHLNIDVDPEVLGGMRVQVGDEVINGSIADRLEDARRRMAS.

Belongs to the ATPase delta chain family. In terms of assembly, F-type ATPases have 2 components, F(1) - the catalytic core - and F(0) - the membrane proton channel. F(1) has five subunits: alpha(3), beta(3), gamma(1), delta(1), epsilon(1). F(0) has three main subunits: a(1), b(2) and c(10-14). The alpha and beta chains form an alternating ring which encloses part of the gamma chain. F(1) is attached to F(0) by a central stalk formed by the gamma and epsilon chains, while a peripheral stalk is formed by the delta and b chains.

The protein resides in the cell membrane. F(1)F(0) ATP synthase produces ATP from ADP in the presence of a proton or sodium gradient. F-type ATPases consist of two structural domains, F(1) containing the extramembraneous catalytic core and F(0) containing the membrane proton channel, linked together by a central stalk and a peripheral stalk. During catalysis, ATP synthesis in the catalytic domain of F(1) is coupled via a rotary mechanism of the central stalk subunits to proton translocation. Its function is as follows. This protein is part of the stalk that links CF(0) to CF(1). It either transmits conformational changes from CF(0) to CF(1) or is implicated in proton conduction. The polypeptide is ATP synthase subunit delta (Streptomyces avermitilis (strain ATCC 31267 / DSM 46492 / JCM 5070 / NBRC 14893 / NCIMB 12804 / NRRL 8165 / MA-4680)).